The primary structure comprises 274 residues: Large ribosomal subunit protein uL2 (274 aa).

Disordered regions lie at residues 40 to 59 and 223 to 274; these read SGGR…GGHK and VAMN…RRSR. Composition is skewed to basic residues over residues 49–59 and 256–274; these read VTRRHQGGGHK and YRTR…RRSR.

Belongs to the universal ribosomal protein uL2 family. In terms of assembly, part of the 50S ribosomal subunit. Forms a bridge to the 30S subunit in the 70S ribosome.

Functionally, one of the primary rRNA binding proteins. Required for association of the 30S and 50S subunits to form the 70S ribosome, for tRNA binding and peptide bond formation. It has been suggested to have peptidyltransferase activity; this is somewhat controversial. Makes several contacts with the 16S rRNA in the 70S ribosome. In Acidithiobacillus ferrooxidans (strain ATCC 23270 / DSM 14882 / CIP 104768 / NCIMB 8455) (Ferrobacillus ferrooxidans (strain ATCC 23270)), this protein is Large ribosomal subunit protein uL2.